The primary structure comprises 350 residues: Serine/threonine-protein kinase SRK2F (350 aa).

Residues 4-260 enclose the Protein kinase domain; it reads YDILRDLGSG…VPEIEKHPWF (257 aa). ATP contacts are provided by residues 10–18 and Lys-33; that span reads LGSGNFGVA. The active-site Proton acceptor is Asp-123. A coiled-coil region spans residues 270-303; it reads EEEKCDNGVEEEEEEEEKCRQSVEEIVKIIEEAR.

Belongs to the protein kinase superfamily. Ser/Thr protein kinase family. Expressed in seedlings.

It catalyses the reaction L-seryl-[protein] + ATP = O-phospho-L-seryl-[protein] + ADP + H(+). It carries out the reaction L-threonyl-[protein] + ATP = O-phospho-L-threonyl-[protein] + ADP + H(+). This Arabidopsis thaliana (Mouse-ear cress) protein is Serine/threonine-protein kinase SRK2F (SRK2F).